The following is a 174-amino-acid chain: Nucleoside-triphosphatase THEP1 (174 aa).

Residues 7 to 14 and 94 to 101 each bind ATP; these read GRPGVGKT and LIIIDEIG.

It belongs to the THEP1 NTPase family.

The catalysed reaction is a ribonucleoside 5'-triphosphate + H2O = a ribonucleoside 5'-diphosphate + phosphate + H(+). Has nucleotide phosphatase activity towards ATP, GTP, CTP, TTP and UTP. May hydrolyze nucleoside diphosphates with lower efficiency. This is Nucleoside-triphosphatase THEP1 from Thermotoga sp. (strain RQ2).